The primary structure comprises 352 residues: DNA-directed RNA polymerase subunit alpha (352 aa).

An alpha N-terminal domain (alpha-NTD) region spans residues 1–226 (MLISQRPTLT…ELFGLARELN (226 aa)). The segment at 243–352 (HIASFGLPIE…EQDYAETEQL (110 aa)) is alpha C-terminal domain (alpha-CTD). Residues 324–352 (DASTGTWSDSGTFSDNDGGEQDYAETEQL) are disordered. The segment covering 326–338 (STGTWSDSGTFSD) has biased composition (polar residues). The segment covering 340–352 (DGGEQDYAETEQL) has biased composition (acidic residues).

Belongs to the RNA polymerase alpha chain family. In terms of assembly, homodimer. The RNAP catalytic core consists of 2 alpha, 1 beta, 1 beta' and 1 omega subunit. When a sigma factor is associated with the core the holoenzyme is formed, which can initiate transcription.

It carries out the reaction RNA(n) + a ribonucleoside 5'-triphosphate = RNA(n+1) + diphosphate. In terms of biological role, DNA-dependent RNA polymerase catalyzes the transcription of DNA into RNA using the four ribonucleoside triphosphates as substrates. The protein is DNA-directed RNA polymerase subunit alpha of Nocardia farcinica (strain IFM 10152).